The following is a 143-amino-acid chain: Nucleoside diphosphate kinase (143 aa).

6 residues coordinate ATP: Lys-11, Phe-59, Arg-87, Thr-93, Arg-104, and Asn-114. His-117 functions as the Pros-phosphohistidine intermediate in the catalytic mechanism.

It belongs to the NDK family. Homotetramer. Mg(2+) serves as cofactor.

Its subcellular location is the cytoplasm. The catalysed reaction is a 2'-deoxyribonucleoside 5'-diphosphate + ATP = a 2'-deoxyribonucleoside 5'-triphosphate + ADP. The enzyme catalyses a ribonucleoside 5'-diphosphate + ATP = a ribonucleoside 5'-triphosphate + ADP. Functionally, major role in the synthesis of nucleoside triphosphates other than ATP. The ATP gamma phosphate is transferred to the NDP beta phosphate via a ping-pong mechanism, using a phosphorylated active-site intermediate. The sequence is that of Nucleoside diphosphate kinase from Escherichia coli O81 (strain ED1a).